A 79-amino-acid chain; its full sequence is Acyl carrier protein (79 aa).

The region spanning 4 to 79 is the Carrier domain; that stretch reads EQILVDVQEA…DVVAYIETKL (76 aa). O-(pantetheine 4'-phosphoryl)serine is present on serine 39.

The protein belongs to the acyl carrier protein (ACP) family. Post-translationally, 4'-phosphopantetheine is transferred from CoA to a specific serine of apo-ACP by AcpS. This modification is essential for activity because fatty acids are bound in thioester linkage to the sulfhydryl of the prosthetic group.

It is found in the cytoplasm. Its pathway is lipid metabolism; fatty acid biosynthesis. Its function is as follows. Carrier of the growing fatty acid chain in fatty acid biosynthesis. This Exiguobacterium sp. (strain ATCC BAA-1283 / AT1b) protein is Acyl carrier protein.